The chain runs to 876 residues: Leucine--tRNA ligase (876 aa).

Residues 43–53 (PYPSGRIHMGH) carry the 'HIGH' region motif. The 'KMSKS' region motif lies at 632–636 (KMSKS). Lys635 provides a ligand contact to ATP.

It belongs to the class-I aminoacyl-tRNA synthetase family.

It is found in the cytoplasm. It carries out the reaction tRNA(Leu) + L-leucine + ATP = L-leucyl-tRNA(Leu) + AMP + diphosphate. This is Leucine--tRNA ligase from Sinorhizobium fredii (strain NBRC 101917 / NGR234).